A 214-amino-acid polypeptide reads, in one-letter code: Small ribosomal subunit protein uS5 (214 aa).

The 64-residue stretch at 54 to 117 folds into the S5 DRBM domain; sequence LKYEVVDIKV…RDAKMNIIPV (64 aa).

Belongs to the universal ribosomal protein uS5 family. As to quaternary structure, part of the 30S ribosomal subunit. Contacts protein S4.

With S4 and S12 plays an important role in translational accuracy. This Saccharolobus solfataricus (strain ATCC 35092 / DSM 1617 / JCM 11322 / P2) (Sulfolobus solfataricus) protein is Small ribosomal subunit protein uS5.